A 427-amino-acid polypeptide reads, in one-letter code: Adenylosuccinate synthetase (427 aa).

GTP is bound by residues 12-18 (GDEGKGK) and 40-42 (GHT). Aspartate 13 serves as the catalytic Proton acceptor. Mg(2+) contacts are provided by aspartate 13 and glycine 40. Residues 13–16 (DEGK), 38–41 (NAGH), threonine 128, arginine 142, glutamine 223, threonine 238, and arginine 302 contribute to the IMP site. Histidine 41 serves as the catalytic Proton donor. 298-304 (VTTGRAR) provides a ligand contact to substrate. GTP contacts are provided by residues arginine 304, 330 to 332 (KLD), and 412 to 414 (GVG).

This sequence belongs to the adenylosuccinate synthetase family. In terms of assembly, homodimer. Mg(2+) is required as a cofactor.

The protein localises to the cytoplasm. The enzyme catalyses IMP + L-aspartate + GTP = N(6)-(1,2-dicarboxyethyl)-AMP + GDP + phosphate + 2 H(+). The protein operates within purine metabolism; AMP biosynthesis via de novo pathway; AMP from IMP: step 1/2. Functionally, plays an important role in the de novo pathway of purine nucleotide biosynthesis. Catalyzes the first committed step in the biosynthesis of AMP from IMP. This is Adenylosuccinate synthetase from Frankia alni (strain DSM 45986 / CECT 9034 / ACN14a).